A 65-amino-acid polypeptide reads, in one-letter code: uncharacterized protein (65 aa).

An N-terminal signal peptide occupies residues 1 to 16 (MMHVCSLLVSFDVVKS).

This is an uncharacterized protein from Saccharomyces cerevisiae (strain ATCC 204508 / S288c) (Baker's yeast).